Here is a 507-residue protein sequence, read N- to C-terminus: RNA-splicing ligase RtcB homolog (507 aa).

5 residues coordinate Mn(2+): aspartate 121, cysteine 124, histidine 229, histidine 261, and histidine 355. 228–232 (NHYAE) contacts GMP. Residues 355–356 (HN), 404–407 (GGTM), serine 411, 430–433 (HGAG), and lysine 506 contribute to the GMP site. Histidine 430 serves as the catalytic GMP-histidine intermediate.

The protein belongs to the RtcB family. As to quaternary structure, catalytic component of the tRNA-splicing ligase complex. Mn(2+) is required as a cofactor.

It carries out the reaction a 3'-end 3'-phospho-ribonucleotide-RNA + a 5'-end dephospho-ribonucleoside-RNA + GTP = a ribonucleotidyl-ribonucleotide-RNA + GMP + diphosphate. The catalysed reaction is a 3'-end 2',3'-cyclophospho-ribonucleotide-RNA + a 5'-end dephospho-ribonucleoside-RNA + GTP + H2O = a ribonucleotidyl-ribonucleotide-RNA + GMP + diphosphate + H(+). In terms of biological role, catalytic subunit of the tRNA-splicing ligase complex that acts by directly joining spliced tRNA halves to mature-sized tRNAs by incorporating the precursor-derived splice junction phosphate into the mature tRNA as a canonical 3',5'-phosphodiester. May act as an RNA ligase with broad substrate specificity, and may function toward other RNAs. This Plasmodium yoelii yoelii protein is RNA-splicing ligase RtcB homolog.